A 186-amino-acid chain; its full sequence is Tumor necrosis factor, alpha-induced protein 8-like protein 2 A (186 aa).

Belongs to the TNFAIP8 family. TNFAIP8L2 subfamily.

Acts as a negative regulator of innate and adaptive immunity by maintaining immune homeostasis. Negative regulator of Toll-like receptor and T-cell receptor function. Prevents hyperresponsiveness of the immune system and maintains immune homeostasis. Inhibits jun/ap1 and NF-kappa-B activation. Promotes Fas-induced apoptosis. The chain is Tumor necrosis factor, alpha-induced protein 8-like protein 2 A (tnfaip8l2a) from Danio rerio (Zebrafish).